Reading from the N-terminus, the 168-residue chain is Phosphopantetheine adenylyltransferase (168 aa).

A substrate-binding site is contributed by Thr-10. ATP-binding positions include 10–11 (TF) and His-18. Substrate contacts are provided by Lys-42, Leu-75, and Arg-89. ATP is bound by residues 90-92 (GVR), Glu-100, and 125-131 (YTYVASS).

The protein belongs to the bacterial CoaD family. As to quaternary structure, homohexamer. Mg(2+) serves as cofactor.

It localises to the cytoplasm. The enzyme catalyses (R)-4'-phosphopantetheine + ATP + H(+) = 3'-dephospho-CoA + diphosphate. It participates in cofactor biosynthesis; coenzyme A biosynthesis; CoA from (R)-pantothenate: step 4/5. Its function is as follows. Reversibly transfers an adenylyl group from ATP to 4'-phosphopantetheine, yielding dephospho-CoA (dPCoA) and pyrophosphate. This is Phosphopantetheine adenylyltransferase from Prosthecochloris aestuarii (strain DSM 271 / SK 413).